Here is a 443-residue protein sequence, read N- to C-terminus: Threonine/serine transporter TdcC (443 aa).

The next 11 helical transmembrane spans lie at 22–42 (TTWT…FFPI), 44–64 (AGFG…PIAF), 97–117 (GVVI…IYGV), 140–160 (FVAL…KDLM), 163–183 (VMSF…LSLI), 207–227 (ILVT…FSPI), 259–279 (ASLL…FTLS), 319–339 (ASII…LGTL), 366–386 (ISMI…PNIL), 389–409 (IEAM…MFAI), and 423–443 (ENLF…YKLF).

This sequence belongs to the amino acid/polyamine transporter 2 family. SdaC/TdcC subfamily.

It is found in the cell inner membrane. It catalyses the reaction L-threonine(in) + H(+)(in) = L-threonine(out) + H(+)(out). The enzyme catalyses L-serine(in) + H(+)(in) = L-serine(out) + H(+)(out). Functionally, involved in the import of threonine and serine into the cell, with the concomitant import of a proton (symport system). This chain is Threonine/serine transporter TdcC, found in Enterobacter sp. (strain 638).